We begin with the raw amino-acid sequence, 145 residues long: Male-specific protein scotti (145 aa).

The disordered stretch occupies residues 1–34 (MANNRLMPEGQIIEEDMDGEDQNARELDIDDDDD). Residues 12 to 21 (IIEEDMDGED) are compositionally biased toward acidic residues.

This sequence belongs to the male-specific scotti family.

Its function is as follows. Post-meiotically transcribed gene that has a role in late spermiogenesis; required for actin cone progression during spermatid individualization. This Drosophila willistoni (Fruit fly) protein is Male-specific protein scotti.